A 714-amino-acid polypeptide reads, in one-letter code: Calpain-1 catalytic subunit (714 aa).

The Calpain catalytic domain occupies 55-354; sequence LFRDEAFPPV…FTRLEICNLT (300 aa). Residues glutamine 109 and aspartate 114 each coordinate Ca(2+). Catalysis depends on residues cysteine 115, histidine 272, and asparagine 296. Residues serine 316, aspartate 318, and glutamate 323 each contribute to the Ca(2+) site. Phosphothreonine is present on threonine 354. Residues 355–526 are domain III; sequence PDALKSRTIR…KSAGTAELDD (172 aa). The linker stretch occupies residues 527-542; the sequence is QIQANLPDEQVLSEEE. EF-hand domains are found at residues 541–576, 585–618, 615–650, and 680–714; these read EEID…IISK, FSLE…NRIR, NRIR…AGFK, and VRLE…TMFA. The interval 543–713 is domain IV; the sequence is IDENFKALFR…LFKWLQLTMF (171 aa). Ca(2+) contacts are provided by aspartate 598, aspartate 600, asparagine 602, lysine 604, glutamate 609, aspartate 628, aspartate 630, serine 632, serine 634, and glutamate 639.

Belongs to the peptidase C2 family. As to quaternary structure, forms a heterodimer with a small (regulatory) subunit (CAPNS1). The cofactor is Ca(2+). Undergoes calcium-induced successive autoproteolytic cleavages that generate a membrane-bound 78 kDa active form and an intracellular 75 kDa active form. Calpastatin reduces with high efficiency the transition from 78 kDa to 75 kDa calpain forms. As to expression, ubiquitous.

It is found in the cytoplasm. Its subcellular location is the cell membrane. The catalysed reaction is Broad endopeptidase specificity.. Its activity is regulated as follows. Activated by micromolar concentrations of calcium and inhibited by calpastatin. In terms of biological role, calcium-regulated non-lysosomal thiol-protease which catalyze limited proteolysis of substrates involved in cytoskeletal remodeling and signal transduction. Proteolytically cleaves CTBP1. Cleaves and activates caspase-7 (CASP7). The protein is Calpain-1 catalytic subunit (CAPN1) of Macaca fascicularis (Crab-eating macaque).